The primary structure comprises 435 residues: MKRRASDRGAGETSANAKALGTGIAGNNAKRAGPFVLGPRLGNSPVPSIVQCLARKDGTDDFYQLKILTLEERGEQGIESQEERQGKMLLHTEYSLLSLLHTQDGVVHHHGLFQDRTCEAVEDTESGRMVKKMKKRICLVLDCLCAHDFSDKTADLINLQHYVIKEKRLSERETVVIFYDVVRVVEALHQKNIVHRDLKLGNMVLNKRTHRITITNFCLGKHLVSEGDLLKDQRGSPAYISPDVLSGRPYRGKPSDMWALGVVLFTMLYGQFPFYDSIPQELFRKIKAAEYTIPEDGRVSENTVCLIRKLLVLDPQQRLAAADVLEALSAIIASWQSLSSLSGPLQVVPDIDDQMSSSDSSQEAKVTEECSQYEFENYMRQQLLLAEEKSSIHEARAWVPKRQFGSMPPVRRLGHDAQPMTSLDTAILAQRYLRK.

The Protein kinase domain maps to 35–332 (FVLGPRLGNS…DVLEALSAII (298 aa)). ATP contacts are provided by residues 41–49 (LGNSPVPSI) and K66. Catalysis depends on D197, which acts as the Proton acceptor.

Belongs to the protein kinase superfamily. CAMK Ser/Thr protein kinase family.

It localises to the nucleus. Its subcellular location is the cytoplasm. It carries out the reaction L-seryl-[protein] + ATP = O-phospho-L-seryl-[protein] + ADP + H(+). The enzyme catalyses L-threonyl-[protein] + ATP = O-phospho-L-threonyl-[protein] + ADP + H(+). In terms of biological role, may be a negative regulator of NF-kappa-B and p53-mediated gene transcription. The chain is Serine/threonine-protein kinase 40 (Stk40) from Mus musculus (Mouse).